A 151-amino-acid polypeptide reads, in one-letter code: MKNVIIYTDGACRGNPGPGGWGAILLYGDKEKELFGGEPETTNNRMELMAAIVALETLNTPCQVVLTTDSKYVMDGITQWMANWKKRGWKTASKQPVKNVDLWQRLDAAVQRHDIDWQWVKGHSGHPGNERADALANRGIDEMKHKQGQAS.

In terms of domain architecture, RNase H type-1 spans 1–141 (MKNVIIYTDG…ADALANRGID (141 aa)). Positions 9, 47, 69, and 133 each coordinate Mg(2+).

This sequence belongs to the RNase H family. Monomer. The cofactor is Mg(2+).

The protein resides in the cytoplasm. It carries out the reaction Endonucleolytic cleavage to 5'-phosphomonoester.. Functionally, endonuclease that specifically degrades the RNA of RNA-DNA hybrids. The chain is Ribonuclease H from Alcanivorax borkumensis (strain ATCC 700651 / DSM 11573 / NCIMB 13689 / SK2).